We begin with the raw amino-acid sequence, 224 residues long: UPF0758 protein Rpic_2712 (224 aa).

The region spanning 102–224 is the MPN domain; sequence TFESAQSVKD…VYGFLEHGKM (123 aa). The Zn(2+) site is built by histidine 173, histidine 175, and aspartate 186. The JAMM motif motif lies at 173–186; sequence HNHPTGNTEPSESD.

It belongs to the UPF0758 family.

The sequence is that of UPF0758 protein Rpic_2712 from Ralstonia pickettii (strain 12J).